We begin with the raw amino-acid sequence, 387 residues long: 3-ketoacyl-CoA thiolase (387 aa).

Residue Cys91 is the Acyl-thioester intermediate of the active site. Residues His343 and Cys373 each act as proton acceptor in the active site.

Belongs to the thiolase-like superfamily. Thiolase family. Heterotetramer of two alpha chains (FadB) and two beta chains (FadA).

The protein localises to the cytoplasm. It catalyses the reaction an acyl-CoA + acetyl-CoA = a 3-oxoacyl-CoA + CoA. It participates in lipid metabolism; fatty acid beta-oxidation. Its function is as follows. Catalyzes the final step of fatty acid oxidation in which acetyl-CoA is released and the CoA ester of a fatty acid two carbons shorter is formed. In Shewanella baltica (strain OS155 / ATCC BAA-1091), this protein is 3-ketoacyl-CoA thiolase.